The sequence spans 184 residues: Protein FAM89A (184 aa).

The interval 148-184 (YFQEQNSLHDRRDRGPPRDLSLPVSSLSSSDWILESI) is disordered. The segment covering 154–164 (SLHDRRDRGPP) has biased composition (basic and acidic residues). Residues 167–184 (LSLPVSSLSSSDWILESI) are compositionally biased toward low complexity.

It belongs to the FAM89 family.

In Homo sapiens (Human), this protein is Protein FAM89A (FAM89A).